A 99-amino-acid polypeptide reads, in one-letter code: Protein RnfH (99 aa).

The protein belongs to the UPF0125 (RnfH) family.

This Buchnera aphidicola subsp. Acyrthosiphon pisum (strain 5A) protein is Protein RnfH.